The chain runs to 252 residues: Protein GrpE (252 aa).

Positions 1–22 are enriched in polar residues; the sequence is MHNPQSRGHNLSQAMSDQTVTN. The tract at residues 1–70 is disordered; the sequence is MHNPQSRGHN…EEDQASEATS (70 aa).

This sequence belongs to the GrpE family. As to quaternary structure, homodimer.

The protein localises to the cytoplasm. Its function is as follows. Participates actively in the response to hyperosmotic and heat shock by preventing the aggregation of stress-denatured proteins, in association with DnaK and GrpE. It is the nucleotide exchange factor for DnaK and may function as a thermosensor. Unfolded proteins bind initially to DnaJ; upon interaction with the DnaJ-bound protein, DnaK hydrolyzes its bound ATP, resulting in the formation of a stable complex. GrpE releases ADP from DnaK; ATP binding to DnaK triggers the release of the substrate protein, thus completing the reaction cycle. Several rounds of ATP-dependent interactions between DnaJ, DnaK and GrpE are required for fully efficient folding. The polypeptide is Protein GrpE (Thermosynechococcus vestitus (strain NIES-2133 / IAM M-273 / BP-1)).